Here is a 490-residue protein sequence, read N- to C-terminus: Phosphoglucosamine mutase (490 aa).

Catalysis depends on S139, which acts as the Phosphoserine intermediate. Mg(2+) contacts are provided by S139, D279, D281, and D283. S139 is modified (phosphoserine).

The protein belongs to the phosphohexose mutase family. Mg(2+) serves as cofactor. Post-translationally, activated by phosphorylation.

The catalysed reaction is alpha-D-glucosamine 1-phosphate = D-glucosamine 6-phosphate. Its function is as follows. Catalyzes the conversion of glucosamine-6-phosphate to glucosamine-1-phosphate. This Trichormus variabilis (strain ATCC 29413 / PCC 7937) (Anabaena variabilis) protein is Phosphoglucosamine mutase.